Reading from the N-terminus, the 100-residue chain is Urease subunit gamma (100 aa).

The protein belongs to the urease gamma subunit family. Heterotrimer of UreA (gamma), UreB (beta) and UreC (alpha) subunits. Three heterotrimers associate to form the active enzyme.

It is found in the cytoplasm. It catalyses the reaction urea + 2 H2O + H(+) = hydrogencarbonate + 2 NH4(+). Its pathway is nitrogen metabolism; urea degradation; CO(2) and NH(3) from urea (urease route): step 1/1. The polypeptide is Urease subunit gamma (Synechococcus sp. (strain RCC307)).